A 217-amino-acid chain; its full sequence is Sentrin-specific protease 8 (217 aa).

M1 is modified (N-acetylmethionine). The protease stretch occupies residues S11–L174. Catalysis depends on residues H102 and D119. The Nucleophile role is filled by C163.

The protein belongs to the peptidase C48 family.

Functionally, protease that catalyzes two essential functions in the NEDD8 pathway: processing of full-length NEDD8 to its mature form and deconjugation of NEDD8 from targeted proteins such as cullins or p53. This chain is Sentrin-specific protease 8 (Senp8), found in Rattus norvegicus (Rat).